A 480-amino-acid chain; its full sequence is Trigger factor (480 aa).

The 96-residue stretch at 169–264 folds into the PPIase FKBP-type domain; it reads GDIAVVDFKG…LKELKEKELP (96 aa). A disordered region spans residues 441-480; that stretch reads PEGSLSPAEETEAAESDADADVSQTEQENSEPSTTEVTEG. Acidic residues predominate over residues 449–460; the sequence is EETEAAESDADA. Positions 462-480 are enriched in polar residues; that stretch reads VSQTEQENSEPSTTEVTEG.

Belongs to the FKBP-type PPIase family. Tig subfamily.

It is found in the cytoplasm. The enzyme catalyses [protein]-peptidylproline (omega=180) = [protein]-peptidylproline (omega=0). Functionally, involved in protein export. Acts as a chaperone by maintaining the newly synthesized protein in an open conformation. Functions as a peptidyl-prolyl cis-trans isomerase. This chain is Trigger factor, found in Nostoc punctiforme (strain ATCC 29133 / PCC 73102).